The chain runs to 1742 residues: Kinase non-catalytic C-lobe domain-containing protein 1 (1742 aa).

One can recognise a KIND 1 domain in the interval 37-217 (VSLADILSLR…QELSENTWRG (181 aa)). 2 disordered regions span residues 215–288 (WRGR…EGLA) and 365–455 (FKTQ…TEQS). A Phosphoserine modification is found at Ser267. Over residues 403 to 412 (LEASSPSQGS) the composition is skewed to polar residues. The segment covering 426-445 (DSDHEGHIPRSEEKIPEESR) has biased composition (basic and acidic residues). The 165-residue stretch at 456 to 620 (LSLKDLLSKL…RASTCKVHPE (165 aa)) folds into the KIND 2 domain. Disordered regions lie at residues 703 to 727 (DQLA…REGT), 744 to 876 (SNQL…KMTA), 948 to 1006 (GPAS…LSDI), and 1028 to 1076 (VTRE…ASDF). The segment covering 711 to 727 (SNEKPKEGSGHLDREGT) has biased composition (basic and acidic residues). Low complexity predominate over residues 755–771 (GATPDPDGDSGSPSSAT). Residues 782–791 (VTQQKGTSGT) show a composition bias toward polar residues. Positions 847–861 (SDGHPEKPRPADRKL) are enriched in basic and acidic residues. Over residues 949-965 (PASPSESTSEEPGSQPE) the composition is skewed to low complexity. Position 951 is a phosphoserine (Ser951). A compositionally biased stretch (polar residues) spans 1043–1053 (GPSQDSTSHAS). The stretch at 1112-1177 (HTELEAQSPE…EMKSKVQFLS (66 aa)) forms a coiled coil. Residues 1239–1367 (KARILQAGTP…ALLEVGTERR (129 aa)) enclose the N-terminal Ras-GEF domain. The 252-residue stretch at 1461–1712 (STNQLFTQLT…SGADVSILAA (252 aa)) folds into the Ras-GEF domain.

Interacts (via KIND2) with MAP2; the interaction enhances MAP2 phosphorylation and localizes KNDC1 to dendrites. In terms of tissue distribution, highly expressed in the brain and at low levels in the ovary. In the brain it is most prominently expressed in the cerebellum where it is restricted to the granular Purkinje cell layer.

It localises to the cell projection. Its subcellular location is the dendrite. The protein resides in the perikaryon. In terms of biological role, RAS-Guanine nucleotide exchange factor (GEF) that controls the negative regulation of neuronal dendrite growth by mediating a signaling pathway linking RAS and MAP2. May be involved in cellular senescence. This is Kinase non-catalytic C-lobe domain-containing protein 1 from Mus musculus (Mouse).